A 465-amino-acid polypeptide reads, in one-letter code: ATP synthase subunit beta 2 (465 aa).

148-155 lines the ATP pocket; the sequence is GGAGVGKT.

This sequence belongs to the ATPase alpha/beta chains family. As to quaternary structure, F-type ATPases have 2 components, CF(1) - the catalytic core - and CF(0) - the membrane proton channel. CF(1) has five subunits: alpha(3), beta(3), gamma(1), delta(1), epsilon(1). CF(0) has three main subunits: a(1), b(2) and c(9-12). The alpha and beta chains form an alternating ring which encloses part of the gamma chain. CF(1) is attached to CF(0) by a central stalk formed by the gamma and epsilon chains, while a peripheral stalk is formed by the delta and b chains.

Its subcellular location is the cell inner membrane. The catalysed reaction is ATP + H2O + 4 H(+)(in) = ADP + phosphate + 5 H(+)(out). In terms of biological role, produces ATP from ADP in the presence of a proton gradient across the membrane. The catalytic sites are hosted primarily by the beta subunits. This is ATP synthase subunit beta 2 from Psychromonas ingrahamii (strain DSM 17664 / CCUG 51855 / 37).